Reading from the N-terminus, the 258-residue chain is Global transcriptional regulator CodY (258 aa).

Positions 1–156 (MSTLLSKTRR…SATIVGMELL (156 aa)) are GAF domain. The H-T-H motif DNA-binding region spans 204 to 223 (ASKIADKVGITRSVIVNALR).

Belongs to the CodY family.

The protein resides in the cytoplasm. In terms of biological role, DNA-binding global transcriptional regulator which is involved in the adaptive response to starvation and acts by directly or indirectly controlling the expression of numerous genes in response to nutrient availability. During rapid exponential growth, CodY is highly active and represses genes whose products allow adaptation to nutrient depletion. In Clostridium perfringens (strain SM101 / Type A), this protein is Global transcriptional regulator CodY.